Reading from the N-terminus, the 194-residue chain is Peptidyl-tRNA hydrolase (194 aa).

Position 17 (Y17) interacts with tRNA. Catalysis depends on H22, which acts as the Proton acceptor. The tRNA site is built by Y68, N70, and N116.

This sequence belongs to the PTH family. Monomer.

The protein localises to the cytoplasm. It catalyses the reaction an N-acyl-L-alpha-aminoacyl-tRNA + H2O = an N-acyl-L-amino acid + a tRNA + H(+). Functionally, hydrolyzes ribosome-free peptidyl-tRNAs (with 1 or more amino acids incorporated), which drop off the ribosome during protein synthesis, or as a result of ribosome stalling. Catalyzes the release of premature peptidyl moieties from peptidyl-tRNA molecules trapped in stalled 50S ribosomal subunits, and thus maintains levels of free tRNAs and 50S ribosomes. In Pseudomonas savastanoi pv. phaseolicola (strain 1448A / Race 6) (Pseudomonas syringae pv. phaseolicola (strain 1448A / Race 6)), this protein is Peptidyl-tRNA hydrolase.